Here is a 206-residue protein sequence, read N- to C-terminus: Smr domain-containing protein C11H11.03c (206 aa).

The Smr domain maps to 75–150 (IDLHGLYIDE…NEGRIYVYLP (76 aa)).

Its subcellular location is the cytoplasm. The protein localises to the nucleus. The polypeptide is Smr domain-containing protein C11H11.03c (Schizosaccharomyces pombe (strain 972 / ATCC 24843) (Fission yeast)).